The chain runs to 132 residues: uncharacterized protein (132 aa).

Residues 39–93 form a disordered region; the sequence is HPAGASEALGALPPPRQLVEKRRVSPPRRLDQSGRDGGAVAKCSLSRGLSPPGWT. The span at 56–72 shows a compositional bias: basic and acidic residues; that stretch reads LVEKRRVSPPRRLDQSG.

This is an uncharacterized protein from Homo sapiens (Human).